A 111-amino-acid chain; its full sequence is Cornifelin homolog B (111 aa).

Belongs to the cornifelin family.

This is Cornifelin homolog B (cnfn-b) from Xenopus laevis (African clawed frog).